A 304-amino-acid polypeptide reads, in one-letter code: tRNA dimethylallyltransferase (304 aa).

2–9 contacts ATP; the sequence is GPTASGKT. 4–9 lines the substrate pocket; sequence TASGKT. Interaction with substrate tRNA regions lie at residues 27 to 30, 151 to 155, 232 to 237, and 265 to 272; these read DSAL, QRINR, RCVGYR, and KRQITWLR.

Belongs to the IPP transferase family. In terms of assembly, monomer. The cofactor is Mg(2+).

The catalysed reaction is adenosine(37) in tRNA + dimethylallyl diphosphate = N(6)-dimethylallyladenosine(37) in tRNA + diphosphate. Functionally, catalyzes the transfer of a dimethylallyl group onto the adenine at position 37 in tRNAs that read codons beginning with uridine, leading to the formation of N6-(dimethylallyl)adenosine (i(6)A). The protein is tRNA dimethylallyltransferase of Actinobacillus pleuropneumoniae serotype 7 (strain AP76).